The primary structure comprises 420 residues: Probable pectate lyase C (420 aa).

Residues 1–20 (MKLSAPLLVSLAAFSQAVTA) form the signal peptide. Residues Asn49, Asn165, and Asn202 are each glycosylated (N-linked (GlcNAc...) asparagine). Arg205 is an active-site residue. The EF-hand domain maps to 262–297 (NANFHGYVQNNYYDPDKDGQLDGFELGVSSSNYGGV). Ca(2+)-binding residues include Asp275, Asp277, Asp279, Gln281, and Glu286. The segment at 358–396 (TMGGPGTLNGGTPAKDTDGDGIPDEAEKQLGTDPNTNDS) is disordered. Residue Asn394 is glycosylated (N-linked (GlcNAc...) asparagine).

It belongs to the polysaccharide lyase 1 family. Requires Ca(2+) as cofactor.

The protein resides in the secreted. It catalyses the reaction Eliminative cleavage of (1-&gt;4)-alpha-D-galacturonan to give oligosaccharides with 4-deoxy-alpha-D-galact-4-enuronosyl groups at their non-reducing ends.. Pectinolytic enzyme consist of four classes of enzymes: pectin lyase, polygalacturonase, pectin methylesterase and rhamnogalacturonase. Among pectinolytic enzymes, pectin lyase is the most important in depolymerization of pectin, since it cleaves internal glycosidic bonds of highly methylated pectins. Favors pectate, the anion, over pectin, the methyl ester. The protein is Probable pectate lyase C (plyC) of Aspergillus fumigatus (strain CBS 144.89 / FGSC A1163 / CEA10) (Neosartorya fumigata).